Here is a 339-residue protein sequence, read N- to C-terminus: Phenylalanine--tRNA ligase alpha subunit (339 aa).

Residue Glu254 coordinates Mg(2+).

The protein belongs to the class-II aminoacyl-tRNA synthetase family. Phe-tRNA synthetase alpha subunit type 1 subfamily. Tetramer of two alpha and two beta subunits. It depends on Mg(2+) as a cofactor.

It localises to the cytoplasm. The enzyme catalyses tRNA(Phe) + L-phenylalanine + ATP = L-phenylalanyl-tRNA(Phe) + AMP + diphosphate + H(+). The sequence is that of Phenylalanine--tRNA ligase alpha subunit from Clostridium beijerinckii (strain ATCC 51743 / NCIMB 8052) (Clostridium acetobutylicum).